We begin with the raw amino-acid sequence, 101 residues long: Interleukin-8 (101 aa).

The first 22 residues, 1–22, serve as a signal peptide directing secretion; sequence MTSKLVVALLAAFMLSAALCEA. Arg-27 carries the citrulline modification. 2 cysteine pairs are disulfide-bonded: Cys-34–Cys-61 and Cys-36–Cys-77.

It belongs to the intercrine alpha (chemokine CxC) family. As to quaternary structure, homodimer. Interacts with TNFAIP6 (via Link domain); this interaction interferes with chemokine binding to glycosaminoglycans. In terms of processing, citrullination at Arg-27 prevents proteolysis, and dampens tissue inflammation, it also enhances leukocytosis, possibly through impaired chemokine clearance from the blood circulation.

The protein localises to the secreted. In terms of biological role, chemotactic factor that mediates inflammatory response by attracting neutrophils, basophils, and T-cells to clear pathogens and protect the host from infection. Also plays an important role in neutrophil activation. Released in response to an inflammatory stimulus, exerts its effect by binding to the G-protein-coupled receptors CXCR1 and CXCR2, primarily found in neutrophils, monocytes and endothelial cells. G-protein heterotrimer (alpha, beta, gamma subunits) constitutively binds to CXCR1/CXCR2 receptor and activation by IL8 leads to beta and gamma subunits release from Galpha (GNAI2 in neutrophils) and activation of several downstream signaling pathways including PI3K and MAPK pathways. In Felis catus (Cat), this protein is Interleukin-8 (CXCL8).